Here is a 235-residue protein sequence, read N- to C-terminus: N-alpha-acetyltransferase 10 (235 aa).

M1 bears the N-acetylmethionine mark. Residues 1–58 (MNIRNARPEDLMNMQHCNLLCLPENYQMKYYFYHGLSWPQLSYIAEDENGKIVGYVLA) are interaction with NAA15. The N-acetyltransferase domain maps to 1–152 (MNIRNARPED…DAYAMKRDLT (152 aa)). N6-acetyllysine; by autocatalysis is present on K136. Over residues 196-213 (EEKGLAAEDSGGDSKDLS) the composition is skewed to basic and acidic residues. A disordered region spans residues 196 to 235 (EEKGLAAEDSGGDSKDLSEVSETTESTDVKDSSEASDSAS). Residue S205 is modified to Phosphoserine. S209 carries the phosphoserine; by IKKB modification. S213 and S216 each carry phosphoserine.

This sequence belongs to the acetyltransferase family. ARD1 subfamily. As to quaternary structure, component of the N-terminal acetyltransferase A complex (also called the NatA complex) composed of NAA10 and NAA15. Interacts with NAA15. Component of the N-terminal acetyltransferase A (NatA)/HYPK complex at least composed of NAA10, NAA15 and HYPK, which has N-terminal acetyltransferase activity. In complex with NAA15, interacts with HYPK. Component of the N-terminal acetyltransferase E (NatE) complex at least composed of NAA10, NAA15 and NAA50. Within the complex interacts with NAA15; the interaction is required for binding to NAAT50. Interacts with NAAT50. The interaction of the NatA complex with NAA50 reduces the acetylation activity of the NatA complex. Component of the N-terminal acetyltransferase E (NatE)/HYPK complex at least composed of NAA10, NAA15, NAA50 and HYPK. In complex with NAA15, interacts with HYPK; the interaction with HYPK reduces the capacity of the NatA complex to interact with NAA50. Interacts with HIF1A (via its ODD domain); the interaction increases HIF1A protein stability during normoxia, an down-regulates it when induced by hypoxia. Interacts with the ribosome. Binds to MYLK. Interacts with NAA16. Interacts (via its C-terminal domain) with TSC2, leading to its acetylation. Interacts with IKBKB. Interacts with HSPA1A and HSPA1B leading to its acetylation. Cleaved by caspases during apoptosis. Post-translationally, phosphorylation by IKBKB/IKKB at Ser-209 destabilises NAA10 and promotes its proteasome-mediated degradation. In terms of processing, autoacetylated at Lys-136 which stimulates its catalytic activity. Ubiquitous.

It is found in the cytoplasm. Its subcellular location is the nucleus. The enzyme catalyses N-terminal glycyl-[protein] + acetyl-CoA = N-terminal N(alpha)-acetylglycyl-[protein] + CoA + H(+). It catalyses the reaction N-terminal L-alanyl-[protein] + acetyl-CoA = N-terminal N(alpha)-acetyl-L-alanyl-[protein] + CoA + H(+). It carries out the reaction N-terminal L-seryl-[protein] + acetyl-CoA = N-terminal N(alpha)-acetyl-L-seryl-[protein] + CoA + H(+). The catalysed reaction is N-terminal L-valyl-[protein] + acetyl-CoA = N-terminal N(alpha)-acetyl-L-valyl-[protein] + CoA + H(+). The enzyme catalyses N-terminal L-cysteinyl-[protein] + acetyl-CoA = N-terminal N(alpha)-acetyl-L-cysteinyl-[protein] + CoA + H(+). It catalyses the reaction N-terminal L-threonyl-[protein] + acetyl-CoA = N-terminal N(alpha)-acetyl-L-threonyl-[protein] + CoA + H(+). Catalytic subunit of the N-terminal acetyltransferase A (NatA) complex which displays alpha (N-terminal) acetyltransferase activity. Acetylates amino termini that are devoid of initiator methionine. The alpha (N-terminal) acetyltransferase activity may be important for vascular, hematopoietic and neuronal growth and development. Without NAA15, displays epsilon (internal) acetyltransferase activity towards HIF1A, thereby promoting its degradation. Represses MYLK kinase activity by acetylation, and thus represses tumor cell migration. Acetylates, and stabilizes TSC2, thereby repressing mTOR activity and suppressing cancer development. Acetylates HSPA1A and HSPA1B at 'Lys-77' which enhances its chaperone activity and leads to preferential binding to co-chaperone HOPX. Acetylates HIST1H4A. Acts as a negative regulator of sister chromatid cohesion during mitosis. The protein is N-alpha-acetyltransferase 10 (Naa10) of Mus musculus (Mouse).